The following is a 483-amino-acid chain: AP-3 complex subunit mu (483 aa).

The MHD domain occupies 211-482 (NNELYVDLLE…KTQTGNFQVR (272 aa)).

It belongs to the adaptor complexes medium subunit family. As to quaternary structure, adaptor protein complex 3 (AP-3) is a heterotetramer composed of 2 large adaptins (APL5 and APL6), a medium adaptin (APM3) and a small adaptin (APS3).

It is found in the golgi apparatus. The protein resides in the cytoplasmic vesicle membrane. Its function is as follows. Part of the AP-3 complex, an adaptor-related complex which is not clathrin-associated. The complex is associated with the Golgi region as well as more peripheral structures. It facilitates the budding of vesicles from the Golgi membrane and may be directly involved in trafficking to the vacuole. Required for the transport via the ALP pathway, which directs the transport of the cargo proteins PHO8 and VAM3 to the vacuole. The polypeptide is AP-3 complex subunit mu (APM3) (Saccharomyces cerevisiae (strain ATCC 204508 / S288c) (Baker's yeast)).